The chain runs to 150 residues: Testis-expressed protein 22 (150 aa).

The span at Met1–Arg23 shows a compositional bias: basic and acidic residues. Positions Met1–Leu26 are disordered.

Its subcellular location is the cytoplasm. It localises to the cytoplasmic vesicle. The protein resides in the secretory vesicle. It is found in the acrosome. This Homo sapiens (Human) protein is Testis-expressed protein 22 (TEX22).